A 422-amino-acid chain; its full sequence is GTPase Obg (422 aa).

Residues A2–M157 enclose the Obg domain. The region spanning S158–E325 is the OBG-type G domain. GTP is bound by residues G164–S171, F189–V193, D210–G213, N279–D282, and S306–I308. 2 residues coordinate Mg(2+): S171 and T191. The 87-residue stretch at E334–G420 folds into the OCT domain.

The protein belongs to the TRAFAC class OBG-HflX-like GTPase superfamily. OBG GTPase family. As to quaternary structure, monomer. It depends on Mg(2+) as a cofactor.

The protein resides in the cytoplasm. In terms of biological role, an essential GTPase which binds GTP, GDP and possibly (p)ppGpp with moderate affinity, with high nucleotide exchange rates and a fairly low GTP hydrolysis rate. Plays a role in control of the cell cycle, stress response, ribosome biogenesis and in those bacteria that undergo differentiation, in morphogenesis control. The protein is GTPase Obg of Mycoplasmopsis agalactiae (strain NCTC 10123 / CIP 59.7 / PG2) (Mycoplasma agalactiae).